We begin with the raw amino-acid sequence, 283 residues long: Biotin synthase (283 aa).

One can recognise a Radical SAM core domain in the interval 3-232 (KISNEIFLCS…NTRLMIAGGR (230 aa)). [4Fe-4S] cluster is bound by residues Cys-21, Cys-25, and Cys-28. The [2Fe-2S] cluster site is built by Cys-65, Cys-100, and Arg-225.

Belongs to the radical SAM superfamily. Biotin synthase family. In terms of assembly, homodimer. The cofactor is [4Fe-4S] cluster. [2Fe-2S] cluster serves as cofactor.

The catalysed reaction is (4R,5S)-dethiobiotin + (sulfur carrier)-SH + 2 reduced [2Fe-2S]-[ferredoxin] + 2 S-adenosyl-L-methionine = (sulfur carrier)-H + biotin + 2 5'-deoxyadenosine + 2 L-methionine + 2 oxidized [2Fe-2S]-[ferredoxin]. It participates in cofactor biosynthesis; biotin biosynthesis; biotin from 7,8-diaminononanoate: step 2/2. In terms of biological role, catalyzes the conversion of dethiobiotin (DTB) to biotin by the insertion of a sulfur atom into dethiobiotin via a radical-based mechanism. This Helicobacter hepaticus (strain ATCC 51449 / 3B1) protein is Biotin synthase.